The primary structure comprises 513 residues: Tigger transposable element-derived protein 4 (513 aa).

An HTH psq-type domain is found at 12-63 (PVTVKKKKSLSIEEKIDIINAVESGKKKAEIAAEYGIKKNSLSSIMKNKDKV). 2 consecutive DNA-binding regions (H-T-H motif) follow at residues 39–59 (KAEI…IMKN) and 108–139 (PMLR…FKSR). Residues 75 to 146 (KRKRLRTAFY…KSRYGLVFRA (72 aa)) enclose the HTH CENPB-type domain. Residues 174 to 375 (YHPKNVFNVK…VTPETIVKSY (202 aa)) enclose the DDE-1 domain. Residues 433 to 448 (TQKDDAEWAGESKQDE) show a composition bias toward basic and acidic residues. The interval 433-473 (TQKDDAEWAGESKQDETGLYTSDEEEEDSGALEVDLPSPSK) is disordered.

This sequence belongs to the tigger transposable element derived protein family.

The protein resides in the nucleus. The polypeptide is Tigger transposable element-derived protein 4 (Tigd4) (Mus musculus (Mouse)).